The following is a 427-amino-acid chain: Dihydrofolate synthetase (427 aa).

ATP is bound at residue 34–37; the sequence is GKGS. Positions 123 and 153 each coordinate Mg(2+). ATP is bound by residues R275 and D296.

It belongs to the folylpolyglutamate synthase family.

Its subcellular location is the cytoplasm. The enzyme catalyses 7,8-dihydropteroate + L-glutamate + ATP = 7,8-dihydrofolate + ADP + phosphate + H(+). Its pathway is cofactor biosynthesis; tetrahydrofolylpolyglutamate biosynthesis. In terms of biological role, glutamate-adding enzyme which catalyzes the binding of the first glutamyl side chain to dihydropteroate. Leads to the de nove synthesis of tetrahydrofolate. This is Dihydrofolate synthetase (FOL3) from Saccharomyces cerevisiae (strain ATCC 204508 / S288c) (Baker's yeast).